A 290-amino-acid chain; its full sequence is uncharacterized protein (290 aa).

Transmembrane regions (helical) follow at residues 14-34, 82-102, 115-135, 158-174, and 176-196; these read ALLN…IGIL, ISSL…LIGG, NLIA…IYLY, DAFV…SSQL, and LPWV…KTAW.

It belongs to the cation diffusion facilitator (CDF) transporter (TC 2.A.4) family.

Its subcellular location is the cell membrane. This is an uncharacterized protein from Bacillus subtilis (strain 168).